Reading from the N-terminus, the 156-residue chain is Small ribosomal subunit protein uS7 (156 aa).

It belongs to the universal ribosomal protein uS7 family. As to quaternary structure, part of the 30S ribosomal subunit. Contacts proteins S9 and S11.

Its function is as follows. One of the primary rRNA binding proteins, it binds directly to 16S rRNA where it nucleates assembly of the head domain of the 30S subunit. Is located at the subunit interface close to the decoding center, probably blocks exit of the E-site tRNA. This chain is Small ribosomal subunit protein uS7, found in Phytoplasma mali (strain AT).